The chain runs to 436 residues: Nicotinate phosphoribosyltransferase (436 aa).

His231 carries the post-translational modification Phosphohistidine; by autocatalysis.

Belongs to the NAPRTase family. In terms of processing, transiently phosphorylated on a His residue during the reaction cycle. Phosphorylation strongly increases the affinity for substrates and increases the rate of nicotinate D-ribonucleotide production. Dephosphorylation regenerates the low-affinity form of the enzyme, leading to product release.

The catalysed reaction is nicotinate + 5-phospho-alpha-D-ribose 1-diphosphate + ATP + H2O = nicotinate beta-D-ribonucleotide + ADP + phosphate + diphosphate. The protein operates within cofactor biosynthesis; NAD(+) biosynthesis; nicotinate D-ribonucleotide from nicotinate: step 1/1. Catalyzes the synthesis of beta-nicotinate D-ribonucleotide from nicotinate and 5-phospho-D-ribose 1-phosphate at the expense of ATP. This is Nicotinate phosphoribosyltransferase from Vibrio parahaemolyticus serotype O3:K6 (strain RIMD 2210633).